A 264-amino-acid polypeptide reads, in one-letter code: Short-chain dehydrogenase/reductase malC (264 aa).

Residues 13–35 (GKNVLIIGGTSGIGFAVAQLVIE) form a helical membrane-spanning segment. 11 residues coordinate NADP(+): T22, S23, I25, S45, N46, K49, D75, N88, R130, V202, and T204. N-linked (GlcNAc...) asparagine glycosylation occurs at N249.

The protein belongs to the short-chain dehydrogenases/reductases (SDR) family.

The protein localises to the membrane. The catalysed reaction is 1-hydroxy-3-{[2-(1,1-dimethylallyl)-indol-3-yl]methyl}-6H,7H,8H-5lambda(5)-pyrrolo[1,2-a]pyrazine + NADPH + H(+) = 1-hydroxy-3-{[2-(1,1-dimethylallyl)-indol-3-yl]methyl}-4H,6H,7H,8H-pyrrolo[1,2-a]pyrazine + NADP(+). It catalyses the reaction 1-hydroxy-3-{[2-(1,1-dimethylallyl)-indol-3-yl]methyl}-4H,6H,7H,8H-pyrrolo[1,2-a]pyrazine = (+)-premalbrancheamide. Its pathway is alkaloid biosynthesis. In terms of biological role, short-chain dehydrogenase/reductase; part of the gene cluster that mediates the biosynthesis of malbrancheamide, a dichlorinated fungal indole alkaloid that belongs to a family of natural products containing a characteristic bicyclo[2.2.2]diazaoctane core. The first step of malbrancheamide biosynthesis involves coupling of L-proline and L-tryptophan by malG, a bimodular NRPS, to produce L-Pro-L-Trp aldehyde through reductive offloading. This compound undergoes spontaneous cyclization and dehydration to give a dienamine which is reverse prenylated at C-2 by malE. The other prenyltransferase present in the cluster, malB, displays modest activity, suggesting that may be a redundant gene in the pathway. Subsequently, a [4+2] Diels-Alder cyclo-addition catalyzed by the bifunctional enzyme malC forms the characteristic bicyclo[2.2.2]diazaoctane ring of premalbrancheamid. The first reaction catalyzed is a NADPH-dependent reduction reaction in which the nicotinamide cofactor is a stoichiometric reagent. Either NADH or NADPH is effective as a cofactor. NADP(+) is required for stereocontrolled formation of premalbrancheamide, however it does not appear to be required as a formal stoichiometric reagent because the second reaction performed by malC, the [4+2] cycloaddition, is a balanced chemical reaction without requirement for hydride transfer to balance the reaction. Finally, the flavin-dependent halogenase malA catalyzes the iterative dichlorination of the indole ring of premalbrancheamide to yield C-9 monochlorinated malbrancheamide B, C-8 monochlorinated isomalbrancheamide B, and dichlorinated malbrancheamide. MalA is also able to brominate premalbrancheamide at C-9 to yield malbrancheamide C, and, to a lesser extend, at C-8 to yield isomalbrancheamide C. Finally, malA can brominate C-9 monochlorinated malbrancheamide B at C-8 to yield malbrancheamide D, or C-8 monochlorinated isomalbrancheamide B at C-9 to produce isomalbrancheamide D. In Malbranchea aurantiaca, this protein is Short-chain dehydrogenase/reductase malC.